Here is a 325-residue protein sequence, read N- to C-terminus: H-2 class I histocompatibility antigen, Q10 alpha chain (325 aa).

A signal peptide spans 1–24; sequence MGAMAPRTLLLLLAAALAPTQTQA. An alpha-1 region spans residues 25–114; sequence GSHSMRYFET…LLGYYNQSES (90 aa). At 25-310 the chain is on the extracellular side; that stretch reads GSHSMRYFET…PPSTDSIMSH (286 aa). A glycan (N-linked (GlcNAc...) asparagine) is linked at N110. The segment at 115 to 206 is alpha-2; sequence GSHTIQWMYG…ELGKETLLRT (92 aa). 2 cysteine pairs are disulfide-bonded: C125/C188 and C227/C283. Residues 207–298 form an alpha-3 region; that stretch reads DPPKTHVTHH…GLPEPLTLRW (92 aa). Residues 209–297 enclose the Ig-like C1-type domain; that stretch reads PKTHVTHHPG…EGLPEPLTLR (89 aa). The N-linked (GlcNAc...) asparagine glycan is linked to N280. The interval 299 to 310 is connecting peptide; it reads EPPPSTDSIMSH. Residues 311 to 324 traverse the membrane as a helical segment; the sequence is IADLLWPSLKLWWY.

The protein belongs to the MHC class I family. In terms of assembly, heterodimer of an alpha chain and a beta chain (beta-2-microglobulin).

It is found in the membrane. Its function is as follows. Involved in the presentation of foreign antigens to the immune system. The polypeptide is H-2 class I histocompatibility antigen, Q10 alpha chain (H2-Q10) (Mus musculus (Mouse)).